The following is a 766-amino-acid chain: Darlin (766 aa).

4 ARM repeats span residues 82–119 (QLFEFLLPNGVETLNTDTTVEQSELFSMVCRLLGNLTY), 167–208 (DFIQ…NLVD), 423–464 (EPNC…NLTL), and 465–537 (PTIN…ASMD). The interval 561–585 (EEKEKTIEKTDEKTDEKTNEKKQSK) is disordered. The stretch at 610-649 (HQEKMKQLIEESVEPFFSLLQSPFPILQVEGAKGLVLLIK) is one ARM 5 repeat.

Belongs to the RAP1GDS1 family. Binds to small GTPases racE, racC but not rab21. Binds preferentially to GDP-bound racE.

Functionally, part of a signaling pathway that initiates the aggregation and leads to the formation of aggregation centers or streams. Not essential for cytokinesis, pinocytosis or phagocytosis. Not essential for development, except in starvation-induced aggregation. This Dictyostelium discoideum (Social amoeba) protein is Darlin (darA).